The sequence spans 576 residues: Lysine--tRNA ligase, mitochondrial (576 aa).

The N-terminal 30 residues, Met1–Ser30, are a transit peptide targeting the mitochondrion.

Belongs to the class-II aminoacyl-tRNA synthetase family.

It is found in the mitochondrion matrix. It catalyses the reaction tRNA(Lys) + L-lysine + ATP = L-lysyl-tRNA(Lys) + AMP + diphosphate. Functionally, catalyzes the attachment of lysine to tRNA(Lys) in the mitochondrion. In Saccharomyces cerevisiae (strain ATCC 204508 / S288c) (Baker's yeast), this protein is Lysine--tRNA ligase, mitochondrial (MSK1).